Reading from the N-terminus, the 186-residue chain is Adenylate kinase (186 aa).

14-19 (GAGKGT) lines the ATP pocket. Positions 34–63 (STGDILRDHVARGTPLGERVRPIMERGDLV) are NMP. AMP contacts are provided by residues Thr35, Arg40, 61 to 63 (DLV), 84 to 87 (GFPR), and Gln91. The LID stretch occupies residues 125 to 135 (RRAELEGRSDD). Arg126 lines the ATP pocket. 2 residues coordinate AMP: Arg132 and Arg143. An ATP-binding site is contributed by Gly171.

The protein belongs to the adenylate kinase family. In terms of assembly, monomer.

The protein resides in the cytoplasm. It carries out the reaction AMP + ATP = 2 ADP. It participates in purine metabolism; AMP biosynthesis via salvage pathway; AMP from ADP: step 1/1. Functionally, catalyzes the reversible transfer of the terminal phosphate group between ATP and AMP. Plays an important role in cellular energy homeostasis and in adenine nucleotide metabolism. The protein is Adenylate kinase of Thermus thermophilus (strain ATCC BAA-163 / DSM 7039 / HB27).